Consider the following 1027-residue polypeptide: Error-prone DNA polymerase (1027 aa).

It belongs to the DNA polymerase type-C family. DnaE2 subfamily.

The protein resides in the cytoplasm. The catalysed reaction is DNA(n) + a 2'-deoxyribonucleoside 5'-triphosphate = DNA(n+1) + diphosphate. Its function is as follows. DNA polymerase involved in damage-induced mutagenesis and translesion synthesis (TLS). It is not the major replicative DNA polymerase. The protein is Error-prone DNA polymerase of Dechloromonas aromatica (strain RCB).